Consider the following 203-residue polypeptide: Orotate phosphoribosyltransferase (203 aa).

5-phospho-alpha-D-ribose 1-diphosphate-binding positions include Arg94, Lys98, His100, and 120-128 (EDLISTGGS). Ser124 provides a ligand contact to orotate.

This sequence belongs to the purine/pyrimidine phosphoribosyltransferase family. PyrE subfamily. As to quaternary structure, homodimer. Mg(2+) serves as cofactor.

It catalyses the reaction orotidine 5'-phosphate + diphosphate = orotate + 5-phospho-alpha-D-ribose 1-diphosphate. It functions in the pathway pyrimidine metabolism; UMP biosynthesis via de novo pathway; UMP from orotate: step 1/2. Catalyzes the transfer of a ribosyl phosphate group from 5-phosphoribose 1-diphosphate to orotate, leading to the formation of orotidine monophosphate (OMP). The chain is Orotate phosphoribosyltransferase from Staphylococcus aureus (strain Mu50 / ATCC 700699).